A 1092-amino-acid chain; its full sequence is Isoleucine--tRNA ligase (1092 aa).

The 'HIGH' region signature appears at 53–63 (PFANGLPHYGH). Positions 613–617 (KLSKR) match the 'KMSKS' region motif. Residue Lys616 participates in ATP binding.

This sequence belongs to the class-I aminoacyl-tRNA synthetase family. IleS type 2 subfamily. As to quaternary structure, monomer. The cofactor is Zn(2+).

Its subcellular location is the cytoplasm. The enzyme catalyses tRNA(Ile) + L-isoleucine + ATP = L-isoleucyl-tRNA(Ile) + AMP + diphosphate. In terms of biological role, catalyzes the attachment of isoleucine to tRNA(Ile). As IleRS can inadvertently accommodate and process structurally similar amino acids such as valine, to avoid such errors it has two additional distinct tRNA(Ile)-dependent editing activities. One activity is designated as 'pretransfer' editing and involves the hydrolysis of activated Val-AMP. The other activity is designated 'posttransfer' editing and involves deacylation of mischarged Val-tRNA(Ile). In Rickettsia conorii (strain ATCC VR-613 / Malish 7), this protein is Isoleucine--tRNA ligase.